We begin with the raw amino-acid sequence, 485 residues long: Pup--protein ligase (485 aa).

Glutamate 33 serves as a coordination point for Mg(2+). Arginine 76 contacts ATP. Mg(2+) is bound at residue tyrosine 78. Catalysis depends on aspartate 80, which acts as the Proton acceptor. Mg(2+) is bound at residue glutamate 86. Residues threonine 89 and tryptophan 451 each coordinate ATP.

The protein belongs to the Pup ligase/Pup deamidase family. Pup-conjugating enzyme subfamily.

It catalyses the reaction ATP + [prokaryotic ubiquitin-like protein]-L-glutamate + [protein]-L-lysine = ADP + phosphate + N(6)-([prokaryotic ubiquitin-like protein]-gamma-L-glutamyl)-[protein]-L-lysine.. It functions in the pathway protein degradation; proteasomal Pup-dependent pathway. The protein operates within protein modification; protein pupylation. Its function is as follows. Catalyzes the covalent attachment of the prokaryotic ubiquitin-like protein modifier Pup to the proteasomal substrate proteins, thereby targeting them for proteasomal degradation. This tagging system is termed pupylation. The ligation reaction involves the side-chain carboxylate of the C-terminal glutamate of Pup and the side-chain amino group of a substrate lysine. The polypeptide is Pup--protein ligase (Bifidobacterium longum subsp. infantis (strain ATCC 15697 / DSM 20088 / JCM 1222 / NCTC 11817 / S12)).